Reading from the N-terminus, the 615-residue chain is Sorting nexin-41 (615 aa).

Residues 1 to 71 (MWNDEDNNPY…DEGDYVGQAN (71 aa)) are disordered. The segment covering 42–53 (SHSSNPDISDFS) has biased composition (low complexity). A PX domain is found at 93–210 (PDMPILITDA…RFLDPNVSWS (118 aa)). 4 residues coordinate a 1,2-diacyl-sn-glycero-3-phospho-(1D-myo-inositol-3-phosphate): R127, S129, K153, and R176. Disordered stretches follow at residues 218-277 (ASSV…RFPP) and 432-504 (QYLN…RKTS). 2 stretches are compositionally biased toward polar residues: residues 252–263 (LKSTSGTSSSPN) and 434–446 (LNRT…TKQR). A compositionally biased stretch (low complexity) spans 447–456 (SLSTSSATSS).

Belongs to the sorting nexin family.

The protein resides in the endosome membrane. It localises to the endomembrane system. May be required for cytoplasm to vacuole transport (Cvt) and pexophagy. The protein is Sorting nexin-41 (snx41) of Emericella nidulans (strain FGSC A4 / ATCC 38163 / CBS 112.46 / NRRL 194 / M139) (Aspergillus nidulans).